We begin with the raw amino-acid sequence, 318 residues long: 2-keto-3-deoxygluconate permease (318 aa).

Helical transmembrane passes span 10 to 30 (IPGGLMLVPLFLGALCNTFTP), 42 to 62 (GLITGTIPILAVWFFCMGASI), 76 to 96 (VLVVTKIATAWVVALIAGTFL), 105 to 125 (MLAGISVLALVAAMDMTNGGL), 139 to 159 (AGAFVLMSLESGPLMTMVILG), 163 to 183 (IATFEPQLFVGAVLPFLIGFA), 199 to 219 (VQTLIPFFAFALGNTINLSVI), 224 to 244 (FAGIFLGLLVIVVTGIPLILA), 263 to 283 (AGAAVATPLLIANMAPEFAPV), and 289 to 309 (ALVATSVIVTSVLVPIITALW).

Belongs to the KdgT transporter family.

Its subcellular location is the cell inner membrane. It catalyses the reaction 2-dehydro-3-deoxy-D-gluconate(in) + H(+)(in) = 2-dehydro-3-deoxy-D-gluconate(out) + H(+)(out). Its function is as follows. Catalyzes the proton-dependent uptake of 2-keto-3-deoxygluconate (KDG) into the cell. This chain is 2-keto-3-deoxygluconate permease, found in Pectobacterium carotovorum subsp. carotovorum (Erwinia carotovora subsp. carotovora).